The primary structure comprises 614 residues: Zinc metalloproteinase-disintegrin-like protein F1 (614 aa).

Residues 1–20 (MLQVLLVTICLAVFPYQGSS) form the signal peptide. The propeptide occupies 21-192 (IILESGNVND…IKASQFILTP (172 aa)). The Cys-switch; controls maturation motif lies at 167 to 173 (PKKCGVT). A Pyrrolidone carboxylic acid (Glu) modification is found at Glu193. In terms of domain architecture, Peptidase M12B spans 202–398 (KYIKLAIVVD…HTPRCILNEP (197 aa)). An N-linked (GlcNAc...) asparagine glycan is attached at Asn221. Intrachain disulfides connect Cys313-Cys393, Cys353-Cys377, and Cys355-Cys360. A Zn(2+)-binding site is contributed by His338. The short motif at 338–349 (HELGHNLGINHD) is the Metal-binding element. Glu339 functions as the Proton acceptor in the catalytic mechanism. His342 and His348 together coordinate Zn(2+). Residues 406–492 (PAVCGNYVVE…ECPMDHIQKN (87 aa)) enclose the Disintegrin domain. Ca(2+) contacts are provided by Val408, Asn411, Glu415, Glu418, and Asp421. 14 disulfides stabilise this stretch: Cys409/Cys438, Cys420/Cys433, Cys422/Cys428, Cys432/Cys455, Cys446/Cys452, Cys451/Cys477, Cys464/Cys484, Cys471/Cys503, Cys496/Cys508, Cys515/Cys565, Cys530/Cys575, Cys543/Cys553, Cys560/Cys601, and Cys595/Cys607. The D/ECD-tripeptide motif lies at 470-472 (ECD). Positions 472, 475, and 487 each coordinate Ca(2+). The N-linked (GlcNAc...) asparagine glycan is linked to Asn534.

Belongs to the venom metalloproteinase (M12B) family. P-III subfamily. P-IIIa sub-subfamily. In terms of assembly, monomer. Requires Zn(2+) as cofactor. N-glycosylated. Post-translationally, the N-terminus is blocked. Expressed by the venom gland (at protein level). Expressed by the venom gland.

The protein resides in the secreted. With respect to regulation, the alpha-fibrinogenase activity is inhibited by EDTA, but not by pefabloc. Zinc metalloprotease that has fibrinogenolytic activity. Does not have hemorrhagic activity in rats. Cleaves insulin B chain at '38-Ala-|-Leu-39' and '40-Tyr-|-Leu-41' bonds. Hydrolyzes only partially and weakly isolated extracellular matrix (ECM) bovine fibronectin and basal membrane (BM) protein human collagen IV in vitro. Murine laminin is not hydrolyzed, neither isolated nor in a solubilized BM preparation. Nidogen is hydrolyzed at '350-Ser-|-Phe-351' bond in a solubilized BM preparation. Hydrolyzes plasma proteins involved in blood coagulation in vitro. Has alpha-fibrinogenase activity cleaving human fibrinogen alpha chain at '432-Lys-|-Leu-433' bond, but does not cleave beta or gamma chains. Does not cleave fibrin. Hydrolyzes only partially bovine prothrombin at '200-Ser-|-Gly-201' bond, factor X (FX) heavy chain, and very slowly, FX light chain and plasminogen in vitro, without activating any of them. Has no effect in plasma thrombin generation. Does not inhibit platelet aggregation induced by collagen in vitro. May have a delayed pathological action as an anticoagulant in envenomed patients after they received serotherapy as it is not recognized by the venom antiserum. The chain is Zinc metalloproteinase-disintegrin-like protein F1 from Vipera ammodytes ammodytes (Western sand viper).